Reading from the N-terminus, the 389-residue chain is Chalcone synthase 4 (389 aa).

Residue Cys-164 is part of the active site.

The protein belongs to the thiolase-like superfamily. Chalcone/stilbene synthases family.

The enzyme catalyses (E)-4-coumaroyl-CoA + 3 malonyl-CoA + 3 H(+) = 2',4,4',6'-tetrahydroxychalcone + 3 CO2 + 4 CoA. It functions in the pathway secondary metabolite biosynthesis; flavonoid biosynthesis. In terms of biological role, the primary product of this enzyme is 4,2',4',6'-tetrahydroxychalcone (also termed naringenin-chalcone or chalcone) which can under specific conditions spontaneously isomerize into naringenin. The sequence is that of Chalcone synthase 4 (CHS4) from Medicago sativa (Alfalfa).